The primary structure comprises 357 residues: Dual-specificity RNA methyltransferase RlmN (357 aa).

The Proton acceptor role is filled by Glu-89. One can recognise a Radical SAM core domain in the interval 109-340; sequence EGEKYTVCVS…CTIRESKALD (232 aa). Cys-116 and Cys-345 are joined by a disulfide. [4Fe-4S] cluster is bound by residues Cys-123, Cys-127, and Cys-130. S-adenosyl-L-methionine is bound by residues 173–174, Ser-203, 226–228, and Asn-302; these read GE and SLH. The active-site S-methylcysteine intermediate is the Cys-345.

This sequence belongs to the radical SAM superfamily. RlmN family. [4Fe-4S] cluster is required as a cofactor.

The protein resides in the cytoplasm. It carries out the reaction adenosine(2503) in 23S rRNA + 2 reduced [2Fe-2S]-[ferredoxin] + 2 S-adenosyl-L-methionine = 2-methyladenosine(2503) in 23S rRNA + 5'-deoxyadenosine + L-methionine + 2 oxidized [2Fe-2S]-[ferredoxin] + S-adenosyl-L-homocysteine. The catalysed reaction is adenosine(37) in tRNA + 2 reduced [2Fe-2S]-[ferredoxin] + 2 S-adenosyl-L-methionine = 2-methyladenosine(37) in tRNA + 5'-deoxyadenosine + L-methionine + 2 oxidized [2Fe-2S]-[ferredoxin] + S-adenosyl-L-homocysteine. Its function is as follows. Specifically methylates position 2 of adenine 2503 in 23S rRNA and position 2 of adenine 37 in tRNAs. m2A2503 modification seems to play a crucial role in the proofreading step occurring at the peptidyl transferase center and thus would serve to optimize ribosomal fidelity. The protein is Dual-specificity RNA methyltransferase RlmN of Helicobacter pylori (strain HPAG1).